A 30-amino-acid polypeptide reads, in one-letter code: Kappa-sparatoxin-Hv1d (30 aa).

3 disulfides stabilise this stretch: C3/C17, C10/C22, and C16/C26.

In terms of tissue distribution, expressed by the venom gland.

It is found in the secreted. Inhibitor of voltage-gated potassium channels of the Kv4/KCND family. Blocks calcium channels (Cav). The chain is Kappa-sparatoxin-Hv1d from Heteropoda venatoria (Brown huntsman spider).